We begin with the raw amino-acid sequence, 226 residues long: dITP/XTP pyrophosphatase (226 aa).

Position 14-19 (14-19) interacts with substrate; that stretch reads TGNKDK. Mg(2+)-binding residues include glutamate 49 and aspartate 83. Aspartate 83 serves as the catalytic Proton acceptor. Residues threonine 84, 176–179, lysine 199, and 204–205 contribute to the substrate site; these read FGYD and HR.

The protein belongs to the HAM1 NTPase family. As to quaternary structure, homodimer. Mg(2+) serves as cofactor.

It catalyses the reaction XTP + H2O = XMP + diphosphate + H(+). The catalysed reaction is dITP + H2O = dIMP + diphosphate + H(+). It carries out the reaction ITP + H2O = IMP + diphosphate + H(+). Functionally, pyrophosphatase that catalyzes the hydrolysis of nucleoside triphosphates to their monophosphate derivatives, with a high preference for the non-canonical purine nucleotides XTP (xanthosine triphosphate), dITP (deoxyinosine triphosphate) and ITP. Seems to function as a house-cleaning enzyme that removes non-canonical purine nucleotides from the nucleotide pool, thus preventing their incorporation into DNA/RNA and avoiding chromosomal lesions. This is dITP/XTP pyrophosphatase from Chlorobaculum tepidum (strain ATCC 49652 / DSM 12025 / NBRC 103806 / TLS) (Chlorobium tepidum).